The sequence spans 143 residues: Large ribosomal subunit protein uL15 (143 aa).

Residues 1-57 (MQLNNLKPAAGSKHAKRRVGRGIGSGLGKTAGRGHKGQKSRSGGFHKVGFEGGQMPL) are disordered. Residues 21 to 31 (RGIGSGLGKTA) show a composition bias toward gly residues.

Belongs to the universal ribosomal protein uL15 family. As to quaternary structure, part of the 50S ribosomal subunit.

Functionally, binds to the 23S rRNA. The protein is Large ribosomal subunit protein uL15 of Ralstonia pickettii (strain 12J).